A 97-amino-acid polypeptide reads, in one-letter code: Large ribosomal subunit protein uL23 (97 aa).

It belongs to the universal ribosomal protein uL23 family. Part of the 50S ribosomal subunit. Contacts protein L29, and trigger factor when it is bound to the ribosome.

Functionally, one of the early assembly proteins it binds 23S rRNA. One of the proteins that surrounds the polypeptide exit tunnel on the outside of the ribosome. Forms the main docking site for trigger factor binding to the ribosome. This is Large ribosomal subunit protein uL23 from Bartonella henselae (strain ATCC 49882 / DSM 28221 / CCUG 30454 / Houston 1) (Rochalimaea henselae).